Here is a 76-residue protein sequence, read N- to C-terminus: UPF0291 protein Aflv_1503 (76 aa).

The disordered stretch occupies residues Asp-56–His-76.

The protein belongs to the UPF0291 family.

Its subcellular location is the cytoplasm. In Anoxybacillus flavithermus (strain DSM 21510 / WK1), this protein is UPF0291 protein Aflv_1503.